The following is a 419-amino-acid chain: Divergent protein kinase domain 1C (419 aa).

At 1-22 the chain is on the cytoplasmic side; that stretch reads MARAAGARGPAGWCRRRGRCGR. A May mediate ER retention motif is present at residues 16 to 17; sequence RR. Residues 23 to 43 traverse the membrane as a helical segment; the sequence is GTLLAFAAWTAGWVLAAALLL. Residues 44–419 lie on the Lumenal side of the membrane; the sequence is RAHPGVLSER…TLRELQEAEK (376 aa).

The protein belongs to the DIPK family. In terms of processing, among the many cysteines in the lumenal domain, most are probably involved in disulfide bonds.

It localises to the endoplasmic reticulum membrane. The protein is Divergent protein kinase domain 1C of Homo sapiens (Human).